We begin with the raw amino-acid sequence, 150 residues long: Large ribosomal subunit protein uL13 (150 aa).

This sequence belongs to the universal ribosomal protein uL13 family. Part of the 50S ribosomal subunit.

Functionally, this protein is one of the early assembly proteins of the 50S ribosomal subunit, although it is not seen to bind rRNA by itself. It is important during the early stages of 50S assembly. In Chlorobaculum parvum (strain DSM 263 / NCIMB 8327) (Chlorobium vibrioforme subsp. thiosulfatophilum), this protein is Large ribosomal subunit protein uL13.